A 127-amino-acid chain; its full sequence is Aspartate 1-decarboxylase (127 aa).

The active-site Schiff-base intermediate with substrate; via pyruvic acid is serine 25. At serine 25 the chain carries Pyruvic acid (Ser). Residue threonine 57 participates in substrate binding. Tyrosine 58 acts as the Proton donor in catalysis. 73-75 contributes to the substrate binding site; sequence GAA.

It belongs to the PanD family. Heterooctamer of four alpha and four beta subunits. The cofactor is pyruvate. Post-translationally, is synthesized initially as an inactive proenzyme, which is activated by self-cleavage at a specific serine bond to produce a beta-subunit with a hydroxyl group at its C-terminus and an alpha-subunit with a pyruvoyl group at its N-terminus.

The protein localises to the cytoplasm. The enzyme catalyses L-aspartate + H(+) = beta-alanine + CO2. Its pathway is cofactor biosynthesis; (R)-pantothenate biosynthesis; beta-alanine from L-aspartate: step 1/1. Its function is as follows. Catalyzes the pyruvoyl-dependent decarboxylation of aspartate to produce beta-alanine. The polypeptide is Aspartate 1-decarboxylase (Clostridium botulinum (strain 657 / Type Ba4)).